Consider the following 658-residue polypeptide: UvrABC system protein B (658 aa).

One can recognise a Helicase ATP-binding domain in the interval 26–414; it reads AGLKKGLKHQ…PDVIEQIIRP (389 aa). Position 39–46 (39–46) interacts with ATP; that stretch reads GATGTGKT. Residues 92 to 115 carry the Beta-hairpin motif; sequence YYDYYQPEAYVPQSDTYIEKDASI. Residues 430–592 form the Helicase C-terminal domain; the sequence is QIDDLMDEIN…ITPKTIRKEI (163 aa). The region spanning 622–658 is the UVR domain; that stretch reads DIFIEGMEHEMKEAAKALDFERAAELRDALLEIKAEG.

It belongs to the UvrB family. Forms a heterotetramer with UvrA during the search for lesions. Interacts with UvrC in an incision complex.

It is found in the cytoplasm. The UvrABC repair system catalyzes the recognition and processing of DNA lesions. A damage recognition complex composed of 2 UvrA and 2 UvrB subunits scans DNA for abnormalities. Upon binding of the UvrA(2)B(2) complex to a putative damaged site, the DNA wraps around one UvrB monomer. DNA wrap is dependent on ATP binding by UvrB and probably causes local melting of the DNA helix, facilitating insertion of UvrB beta-hairpin between the DNA strands. Then UvrB probes one DNA strand for the presence of a lesion. If a lesion is found the UvrA subunits dissociate and the UvrB-DNA preincision complex is formed. This complex is subsequently bound by UvrC and the second UvrB is released. If no lesion is found, the DNA wraps around the other UvrB subunit that will check the other stand for damage. The chain is UvrABC system protein B from Listeria innocua serovar 6a (strain ATCC BAA-680 / CLIP 11262).